We begin with the raw amino-acid sequence, 299 residues long: tRNA uridine(34) hydroxylase (299 aa).

A Rhodanese domain is found at 132 to 226; the sequence is AGRPVVMLDT…YFEEVGGAHY (95 aa). Residue Cys186 is the Cysteine persulfide intermediate of the active site.

This sequence belongs to the TrhO family.

It catalyses the reaction uridine(34) in tRNA + AH2 + O2 = 5-hydroxyuridine(34) in tRNA + A + H2O. Its function is as follows. Catalyzes oxygen-dependent 5-hydroxyuridine (ho5U) modification at position 34 in tRNAs. The protein is tRNA uridine(34) hydroxylase of Burkholderia mallei (strain NCTC 10247).